The sequence spans 784 residues: ATP-dependent 6-phosphofructokinase, platelet type (784 aa).

Met1 is subject to N-acetylmethionine. Positions 1–398 (MSDLDSSSSS…NLNTYKRLAI (398 aa)) are N-terminal catalytic PFK domain 1. Residues Ser2, Ser6, and Ser20 each carry the phosphoserine modification. ATP-binding positions include Gly33, 96 to 97 (RC), and 126 to 129 (GDGS). Position 127 (Asp127) interacts with Mg(2+). Phosphoserine is present on Ser141. Substrate contacts are provided by residues 172 to 174 (SID), Arg209, 216 to 218 (MGR), Glu272, Arg300, and 306 to 309 (HVQR). The active-site Proton acceptor is Asp174. The residue at position 394 (Lys394) is an N6-acetyllysine. Residues 399 to 410 (KLPDEKIVKSNC) are interdomain linker. The segment at 411–784 (NVAVINVGAP…LESLQHHEEL (374 aa)) is C-terminal regulatory PFK domain 2. Arg480 contacts beta-D-fructose 2,6-bisphosphate. Lys485 carries the post-translational modification N6-acetyllysine. Beta-D-fructose 2,6-bisphosphate contacts are provided by residues 537–541 (TVSNN), Arg575, 582–584 (MGG), and Glu638. Ser539 is a glycosylation site (O-linked (GlcNAc) serine). The residue at position 650 (Tyr650) is a Phosphotyrosine. Beta-D-fructose 2,6-bisphosphate is bound by residues Arg664 and 670-673 (HMQQ). Residue Lys687 is modified to N6-acetyllysine. Arg743 contacts beta-D-fructose 2,6-bisphosphate.

Belongs to the phosphofructokinase type A (PFKA) family. ATP-dependent PFK group I subfamily. Eukaryotic two domain clade 'E' sub-subfamily. Homo- and heterotetramers. Phosphofructokinase (PFK) enzyme functions as a tetramer composed of different combinations of 3 types of subunits, called PFKM (M), PFKL (L) and PFKP (P). The composition of the PFK tetramer differs according to the tissue type it is present in. The kinetic and regulatory properties of the tetrameric enzyme are dependent on the subunit composition, hence can vary across tissues. Interacts with ATG4B; promoting phosphorylation of ATG4B. Requires Mg(2+) as cofactor. In terms of processing, glcNAcylation decreases enzyme activity. As to expression, expression is constant during tumor growth and markedly decreases when cell proliferation stops.

It is found in the cytoplasm. The enzyme catalyses beta-D-fructose 6-phosphate + ATP = beta-D-fructose 1,6-bisphosphate + ADP + H(+). It participates in carbohydrate degradation; glycolysis; D-glyceraldehyde 3-phosphate and glycerone phosphate from D-glucose: step 3/4. Its activity is regulated as follows. Allosterically activated by ADP, AMP, or fructose 2,6-bisphosphate, and allosterically inhibited by ATP or citrate. Its function is as follows. Catalyzes the phosphorylation of D-fructose 6-phosphate to fructose 1,6-bisphosphate by ATP, the first committing step of glycolysis. The sequence is that of ATP-dependent 6-phosphofructokinase, platelet type (Pfkp) from Mus musculus (Mouse).